A 206-amino-acid chain; its full sequence is Putative archaetidylserine decarboxylase proenzyme (206 aa).

Ser172 (schiff-base intermediate with substrate; via pyruvic acid) is an active-site residue. At Ser172 the chain carries Pyruvic acid (Ser); by autocatalysis.

The protein belongs to the phosphatidylserine decarboxylase family. PSD-A subfamily. Heterodimer of a large membrane-associated beta subunit and a small pyruvoyl-containing alpha subunit. The cofactor is pyruvate. Post-translationally, is synthesized initially as an inactive proenzyme. Formation of the active enzyme involves a self-maturation process in which the active site pyruvoyl group is generated from an internal serine residue via an autocatalytic post-translational modification. Two non-identical subunits are generated from the proenzyme in this reaction, and the pyruvate is formed at the N-terminus of the alpha chain, which is derived from the carboxyl end of the proenzyme. The post-translation cleavage follows an unusual pathway, termed non-hydrolytic serinolysis, in which the side chain hydroxyl group of the serine supplies its oxygen atom to form the C-terminus of the beta chain, while the remainder of the serine residue undergoes an oxidative deamination to produce ammonia and the pyruvoyl prosthetic group on the alpha chain.

The protein localises to the cell membrane. It carries out the reaction archaetidylserine + H(+) = archaetidylethanolamine + CO2. Functionally, catalyzes the formation of archaetidylethanolamine (PtdEtn) from archaetidylserine (PtdSer). The protein is Putative archaetidylserine decarboxylase proenzyme of Methanocaldococcus jannaschii (strain ATCC 43067 / DSM 2661 / JAL-1 / JCM 10045 / NBRC 100440) (Methanococcus jannaschii).